The primary structure comprises 1355 residues: MSSDYTDRNNLASAIKTLGDMLEKDEAFQRLMYNASTKGEINRGRVNKVFLKALLSAGDKVGEFLNELIDHLNLFKVLGDFSWNPPVLKEAELNERTSQLRTQQHKYVERVSGFSHYGFGETGTPARGDITSPRGPQVASIEEDLATSKLAELLLAVGDHLEKIEKKGQFLPENVERFSLDCFITSESVKLSSEAVELAPCYTEPVIIQRSKEQTEKYCQEYVRSPHTSSHLLSNDKTQSIRIGQLFSPDSDGNTPKTVILCGDSGRGKSFVLEKIILDWVHLEHHFENFDAVFLLKYEELKCLSEEMSLTELLSRSCSLTSDQISQILQLTPEKVLFLIDGIDDFSFNAHIQISSPTDPSQKAPVISIIHCLMRDLLLVESSVIVTTRYTAAAELSSLCKRPQRFTEIEGFSERRVQEYFQKFFQDEQLFKKAYESMKTNETLLTFCSVPLLCWMVCFCLKKDADQVMTELKTTTSIYVHFVSTLLEDHHQSQSFLRSLGQLAEEGMKNRQNLFDEKSVTRTGLDPATRVFMNKIYLKRKKKHELLFKFKHLSFQEFFAALYYIMLDEEESWCKVSELFNMMESEALIHRSPPIFRGRLSNPIPSVMMFLCGLFNKKVSSSLFEKMKSTFSHNVKLKKKELKKKLMKMIPAMIRQYGFELFALHCLYELQDERFVTKVLETHKFIDLSNVSLRSTDCLVLCYCLRLCPNIRELNFMNCDLTAAKLKILQPALGLCETLRFSVEHLSEIGDLIQILSESKILRELKVREDEYGVESPRWSFNLSVTRGDVLLTLSSSEKNPSFSSVLNIRLTCAQSQISRTDWTLFLQRLRKTGTLTEDSSADDDHVSLQLSSLHSVGLKSLDLTLVSLNESWASGIISLIQNCTSLQQLKVSVTGLLLEEGLKLLKKSLTDPHCTVIIEGRRNCSEPSEEHLRQSYEKVEIHFKPKLLEELAELSICNPGSSALNIHCQSCVDVADSDQWVQVEPSVCRGEGGTEFRITTPAGRFQCSRTRMRWVCDGDVTLHYRAVDGHFLNAELERLQCERVAPVLDVNVISGKLEEAHLPHYMCLAESDPALTNAVKLLSVEDEGISLESVELTRFHAKILQPMFSPKTVLVKLGIPVKVHCDLLIFMTHTCPIILNVYFFPSDSLVEENIKTEEKSSHQIKCSRPEAPLQMKKQHSLEVPDAVVQPEAIKLRGNMKPNFFQVKQPVVNDITMILSRVDDQKSVWTGTIWKKLIDIKLNKTESDLFQSGQKHKTSQPAHSFDKAQFFDTHWCNLIKSVENVDTVADKLLQKQIIHEQFYSEIIHHKSTSEESMRKICVIVRKGSAAVKEIFISILLQENPNLLNHLPSSDS.

An NACHT domain is found at 257-458 (KTVILCGDSG…SVPLLCWMVC (202 aa)). Position 263–270 (263–270 (GDSGRGKS)) interacts with ATP. The segment at 977–1109 (DSDQWVQVEP…FHAKILQPMF (133 aa)) is ZU5. Residues 977 to 1252 (DSDQWVQVEP…NKTESDLFQS (276 aa)) form the FIIND domain. The tract at residues 1110–1252 (SPKTVLVKLG…NKTESDLFQS (143 aa)) is UPA. In terms of domain architecture, CARD spans 1278–1354 (LIKSVENVDT…NLLNHLPSSD (77 aa)).

It belongs to the NLRP family. Interacts with the C-terminal part of nlrp1 (NACHT, LRR and PYD domains-containing protein 1, C-terminus) in absence of pathogens and other damage-associated signals. In terms of assembly, interacts with the N-terminal part of nlrp1 (NACHT, LRR and PYD domains-containing protein 1, N-terminus) in absence of pathogens and other damage-associated signals. Homomultimer; forms the nlrp1 inflammasome polymeric complex, a filament composed of homopolymers of this form in response to pathogens and other damage-associated signals. The nlrp1 inflammasome polymeric complex associates with pycard/asc. Interacts (via CARD domain) with pycard/asc (via CARD domain); leading to pro-inflammatory caspases (caspa and/or caspb) recruitment. Pro-caspase-a and pro-caspase-b filament formation increases local enzyme concentration, resulting in trans-autocleavage and activation. Active caspa and caspb then processes il1b and il18 precursors, leading to the release of mature cytokines in the extracellular milieu and inflammatory response. Autocatalytically cleaved. Autocatalytic cleavage in FIIND region occurs constitutively, prior to activation signals, and is required for inflammasome activity (IL1B release), possibly by facilitating pro-inflammatory caspases (caspa and/or caspb) binding. Both N- and C-terminal parts remain associated non-covalently. In terms of processing, ubiquitinated in response to pathogen-associated signals, leading to its degradation by the proteasome and subsequent release of the cleaved C-terminal part of the protein (NACHT, LRR and PYD domains-containing protein 1, C-terminus), which polymerizes and forms the nlrp1 inflammasome. As to expression, expressed in adult spleen, head kidney, gill and skin and also in the embryo.

Its subcellular location is the cytoplasm. It localises to the inflammasome. With respect to regulation, nlrp1 inflammasome is activated by pathogens and other damage-associated signals: activation promotes ubiquitination and degradation of the N-terminal part, releasing the cleaved C-terminal part of the protein (NACHT, LRR and PYD domains-containing protein 1, C-terminus), which polymerizes and forms the nlrp1 inflammasome. In terms of biological role, acts as the sensor component of the nlrp1 inflammasome, which mediates inflammasome activation in response to various pathogen-associated signals, leading to subsequent pyroptosis. Inflammasomes are supramolecular complexes that assemble in the cytosol in response to pathogens and other damage-associated signals and play critical roles in innate immunity and inflammation. Acts as a recognition receptor (PRR): recognizes specific pathogens and other damage-associated signals, and mediates the formation of the inflammasome polymeric complex. In response to pathogen-associated signals, the N-terminal part of nlrp1 is degraded by the proteasome, releasing the cleaved C-terminal part of the protein (NACHT, LRR and PYD domains-containing protein 1, C-terminus), which polymerizes to initiate the formation of the inflammasome complex: the inflammasome recruits and activate pro-inflammatory caspases (caspa and/or caspb), leading to pyroptosis. Functionally, constitutes the precursor of the nlrp1 inflammasome, which mediates autoproteolytic processing within the FIIND domain to generate the N-terminal and C-terminal parts, which are associated non-covalently in absence of pathogens and other damage-associated signals. Regulatory part that prevents formation of the nlrp1 inflammasome: in absence of pathogens and other damage-associated signals, interacts with the C-terminal part of nlrp1 (NACHT, LRR and PYD domains-containing protein 1, C-terminus), preventing activation of the nlrp1 inflammasome. In response to pathogen-associated signals, this part is ubiquitinated and degraded by the proteasome, releasing the cleaved C-terminal part of the protein, which polymerizes and forms the nlrp1 inflammasome. Its function is as follows. Constitutes the active part of the nlrp1 inflammasome. In absence of pathogens and other damage-associated signals, interacts with the N-terminal part of nlrp1 (NACHT, LRR and PYD domains-containing protein 1, N-terminus), preventing activation of the nlrp1 inflammasome. In response to pathogen-associated signals, the N-terminal part of nlrp1 is degraded by the proteasome, releasing this form, which polymerizes to form the nlrp1 inflammasome complex: the nlrp1 inflammasome complex then directly recruits and activates pro-inflammatory caspases (caspa and/or caspb) activation, leading to subsequent pyroptosis. The chain is NACHT, LRR and PYD domains-containing protein 1 homolog from Danio rerio (Zebrafish).